Here is a 180-residue protein sequence, read N- to C-terminus: Geminin homolog (180 aa).

A compositionally biased stretch (polar residues) spans 1-27 (MSRIGLQQLNNSARNSPFGSEKATGTK). Residues 1–29 (MSRIGLQQLNNSARNSPFGSEKATGTKQI) are disordered.

This sequence belongs to the geminin family. In terms of assembly, homodimer. Interacts with cdt-1; the interaction most likely inhibits the ability of cdt-1 to load the mini-chromosome maintenance (MCM) complex onto DNA and therefore reduces DNA replication licensing activity. Interacts with nob-1 and ceh-32.

Its subcellular location is the cytoplasm. It is found in the nucleus. Functionally, inhibits DNA replication by binding to the DNA replication licensing factor cdt-1. Its interaction with cdt-1 prevents the cdt-1 loading of the mini-chromosome maintenance (MCM) complex onto DNA and therefore DNA replication licencing. The protein is Geminin homolog of Caenorhabditis elegans.